A 92-amino-acid chain; its full sequence is Cell division protein FtsL (92 aa).

At 1–3 the chain is on the cytoplasmic side; that stretch reads MGR. The chain crosses the membrane as a helical span at residues 4-21; sequence ISLIVAALLMLSAISLVT. Residues 22–92 lie on the Periplasmic side of the membrane; the sequence is SRYQSRQLFI…YMNQPAGGAQ (71 aa).

The protein belongs to the FtsL family. As to quaternary structure, part of a complex composed of FtsB, FtsL and FtsQ.

It is found in the cell inner membrane. Functionally, essential cell division protein. May link together the upstream cell division proteins, which are predominantly cytoplasmic, with the downstream cell division proteins, which are predominantly periplasmic. The sequence is that of Cell division protein FtsL from Bordetella pertussis (strain Tohama I / ATCC BAA-589 / NCTC 13251).